We begin with the raw amino-acid sequence, 333 residues long: Probable tRNA pseudouridine synthase B (333 aa).

The Nucleophile role is filled by Asp71. The PUA domain maps to 238 to 313 (LPKIWVRDSA…LVARTDRVVM (76 aa)).

Belongs to the pseudouridine synthase TruB family. Type 2 subfamily.

The catalysed reaction is uridine(55) in tRNA = pseudouridine(55) in tRNA. Could be responsible for synthesis of pseudouridine from uracil-55 in the psi GC loop of transfer RNAs. This is Probable tRNA pseudouridine synthase B from Pyrobaculum calidifontis (strain DSM 21063 / JCM 11548 / VA1).